The sequence spans 419 residues: Cysteine desulfurase (419 aa).

Residues alanine 69–threonine 70, asparagine 157, glutamine 185, and serine 205–histidine 207 contribute to the pyridoxal 5'-phosphate site. Lysine 208 carries the N6-(pyridoxal phosphate)lysine modification. Threonine 245 provides a ligand contact to pyridoxal 5'-phosphate. The active-site Cysteine persulfide intermediate is the cysteine 333. A [2Fe-2S] cluster-binding site is contributed by cysteine 333. The disordered stretch occupies residues threonine 392 to serine 419. The segment covering alanine 404 to serine 413 has biased composition (polar residues).

This sequence belongs to the class-V pyridoxal-phosphate-dependent aminotransferase family. NifS/IscS subfamily. As to quaternary structure, homodimer. Requires pyridoxal 5'-phosphate as cofactor.

The enzyme catalyses (sulfur carrier)-H + L-cysteine = (sulfur carrier)-SH + L-alanine. Functionally, catalyzes the removal of elemental sulfur atoms from cysteine to produce alanine. Seems to participate in the biosynthesis of the nitrogenase metalloclusters by providing the inorganic sulfur required for the Fe-S core formation. This is Cysteine desulfurase from Frankia sp. (strain EuIK1).